The sequence spans 154 residues: Xanthine-guanine phosphoribosyltransferase (154 aa).

5-phospho-alpha-D-ribose 1-diphosphate contacts are provided by residues 37–38 (RG), arginine 69, and 88–96 (EDLVDSGDT). Arginine 69 is a GMP binding site. Aspartate 89 provides a ligand contact to Mg(2+). Guanine-binding residues include aspartate 92 and isoleucine 135. 2 residues coordinate xanthine: aspartate 92 and isoleucine 135. GMP is bound by residues 92–96 (DSGDT) and 134–135 (WI).

The protein belongs to the purine/pyrimidine phosphoribosyltransferase family. XGPT subfamily. As to quaternary structure, homotetramer. The cofactor is Mg(2+).

Its subcellular location is the cell inner membrane. The enzyme catalyses GMP + diphosphate = guanine + 5-phospho-alpha-D-ribose 1-diphosphate. It catalyses the reaction XMP + diphosphate = xanthine + 5-phospho-alpha-D-ribose 1-diphosphate. It carries out the reaction IMP + diphosphate = hypoxanthine + 5-phospho-alpha-D-ribose 1-diphosphate. It functions in the pathway purine metabolism; GMP biosynthesis via salvage pathway; GMP from guanine: step 1/1. The protein operates within purine metabolism; XMP biosynthesis via salvage pathway; XMP from xanthine: step 1/1. Purine salvage pathway enzyme that catalyzes the transfer of the ribosyl-5-phosphate group from 5-phospho-alpha-D-ribose 1-diphosphate (PRPP) to the N9 position of the 6-oxopurines guanine and xanthine to form the corresponding ribonucleotides GMP (guanosine 5'-monophosphate) and XMP (xanthosine 5'-monophosphate), with the release of PPi. To a lesser extent, also acts on hypoxanthine. The protein is Xanthine-guanine phosphoribosyltransferase of Vibrio campbellii (strain ATCC BAA-1116).